Here is a 209-residue protein sequence, read N- to C-terminus: Uracil phosphoribosyltransferase (209 aa).

Residues Arg79, Arg104, and 131–139 (DPMLATGGS) contribute to the 5-phospho-alpha-D-ribose 1-diphosphate site. Residues Ile194 and 199–201 (GDA) contribute to the uracil site. Asp200 is a 5-phospho-alpha-D-ribose 1-diphosphate binding site.

Belongs to the UPRTase family. It depends on Mg(2+) as a cofactor.

The enzyme catalyses UMP + diphosphate = 5-phospho-alpha-D-ribose 1-diphosphate + uracil. Its pathway is pyrimidine metabolism; UMP biosynthesis via salvage pathway; UMP from uracil: step 1/1. Allosterically activated by GTP. Catalyzes the conversion of uracil and 5-phospho-alpha-D-ribose 1-diphosphate (PRPP) to UMP and diphosphate. The chain is Uracil phosphoribosyltransferase from Levilactobacillus brevis (strain ATCC 367 / BCRC 12310 / CIP 105137 / JCM 1170 / LMG 11437 / NCIMB 947 / NCTC 947) (Lactobacillus brevis).